The primary structure comprises 100 residues: Small ribosomal subunit protein uS14c (100 aa).

The protein belongs to the universal ribosomal protein uS14 family. As to quaternary structure, part of the 30S ribosomal subunit.

The protein localises to the plastid. Its subcellular location is the chloroplast. Its function is as follows. Binds 16S rRNA, required for the assembly of 30S particles. The chain is Small ribosomal subunit protein uS14c from Pleurastrum terricola (Filamentous green alga).